A 269-amino-acid polypeptide reads, in one-letter code: Cytolethal distending toxin subunit B (269 aa).

The first 18 residues, 1-18 (MKKYIISLIVFLSFYAQA), serve as a signal peptide directing secretion. The Nuclear localization signal motif lies at 195–210 (REPADLEMNLTVPVRR).

As to quaternary structure, heterotrimer of 3 subunits, CdtA, CdtB and CdtC.

It localises to the secreted. Part of the tripartite complex that is required for the CDT activity. CdtB exhibits a DNA-nicking endonuclease activity, and very probably causes DNA damage in intoxicated cells. This damage induces G2/M cell cycle arrest, chromatin fragmentation, cell distention and nucleus enlargement. This is Cytolethal distending toxin subunit B (cdtB) from Escherichia coli.